The following is a 281-amino-acid chain: Translation initiation factor IF3-4, chloroplastic (281 aa).

Residues 1–51 (MAGITSTVGFNAILAGATKTVSHPVKSKLFGLRLCVPEFSIVSLSPYHHRR) constitute a chloroplast transit peptide. Disordered regions lie at residues 63–86 (GGGG…DDSL) and 253–281 (KVQE…TQDI). Composition is skewed to basic and acidic residues over residues 70 to 79 (PGDRRGRQKE) and 253 to 270 (KVQE…DDKV).

This sequence belongs to the IF-3 family. As to quaternary structure, monomer.

The protein resides in the plastid. It localises to the chloroplast. In terms of biological role, chloroplast translation initiation factor that is essential for the coordination of leaf and chloroplast development. IF-3 binds to the 30S ribosomal subunit and shifts the equilibrium between 70S ribosomes and their 50S and 30S subunits in favor of the free subunits, thus enhancing the availability of 30S subunits on which protein synthesis initiation begins. This Arabidopsis thaliana (Mouse-ear cress) protein is Translation initiation factor IF3-4, chloroplastic.